A 321-amino-acid chain; its full sequence is Olfactory receptor 52P1 (321 aa).

Residues 1 to 27 (MESPNHTDVDPSVFFLLGIPGLEQFHL) lie on the Extracellular side of the membrane. An N-linked (GlcNAc...) asparagine glycan is attached at Asn5. The chain crosses the membrane as a helical span at residues 28–48 (WLSLPVCGLGTATIVGNITIL). Residues 49–56 (VVVATEPV) lie on the Cytoplasmic side of the membrane. A helical transmembrane segment spans residues 57 to 77 (LHKPVYLFLCMLSTIDLAASV). Residues 78-101 (STVPKLLAIFWCGAGHISASACLA) lie on the Extracellular side of the membrane. Cys99 and Cys191 form a disulfide bridge. Residues 102–122 (QMFFIHAFCMMESTVLLAMAF) form a helical membrane-spanning segment. The Cytoplasmic portion of the chain corresponds to 123 to 141 (DRYVAICHPLRYATILTDT). The chain crosses the membrane as a helical span at residues 142 to 162 (IIAHIGVAAVVRGSLLMLPCP). The Extracellular segment spans residues 163–198 (FLIGRLNFCQSHVILHTYCEHMAVVKLACGDTRPNR). The helical transmembrane segment at 199-219 (VYGLTAALLVIGVDLFCIGLS) threads the bilayer. The Cytoplasmic segment spans residues 220–239 (YALSAQAVLRLSSHEARSKA). The helical transmembrane segment at 240-260 (LGTCGSHVCVILISYTPALFS) threads the bilayer. Residues 261–275 (FFTHRFGHHVPVHIH) lie on the Extracellular side of the membrane. The chain crosses the membrane as a helical span at residues 276–296 (ILLANVYLLLPPALNPVVYGV). The Cytoplasmic segment spans residues 297-315 (KTKQIRKRVVRVFQSGQGM).

It belongs to the G-protein coupled receptor 1 family.

It localises to the cell membrane. Its function is as follows. Odorant receptor. The sequence is that of Olfactory receptor 52P1 from Homo sapiens (Human).